The primary structure comprises 152 residues: Cytochrome c-type biogenesis CcmH-like mitochondrial protein (152 aa).

Topologically, residues 1–83 (MATEEDVKQR…ILYTPKFDLQ (83 aa)) are mitochondrial intermembrane. Cys26 and Cys29 together coordinate heme. The chain crosses the membrane as a helical span at residues 84 to 104 (TAAIWLSPVIVGGVAAGVWAY). Topologically, residues 105 to 152 (QKHRQRTNVHIMALNLVRGVPLTPREKETMLDVLTPPPPANKWWWPGK) are mitochondrial matrix.

This sequence belongs to the CcmH/CycL/Ccl2/NrfF family.

It localises to the mitochondrion inner membrane. Functionally, plays a role in mitochondrial cytochrome c maturation. Probable component of a heme lyase complex involved in the reduction of apocytochrome c. This Oryza sativa subsp. japonica (Rice) protein is Cytochrome c-type biogenesis CcmH-like mitochondrial protein.